A 197-amino-acid polypeptide reads, in one-letter code: Adenylate kinase (197 aa).

ATP is bound at residue 16-21 (GAGKGT). Residues 36–65 (STGDILRDHVARGTELGQQVKPILDAGHLV) form an NMP region. AMP is bound by residues Thr37, Arg42, 63 to 65 (HLV), 90 to 93 (GFPR), and Gln97. The LID stretch occupies residues 131–147 (ERGNQAQARGEAVRSDD). Residue Arg132 coordinates ATP. Positions 144 and 155 each coordinate AMP. Position 183 (Gly183) interacts with ATP.

This sequence belongs to the adenylate kinase family. Monomer.

The protein localises to the cytoplasm. It carries out the reaction AMP + ATP = 2 ADP. It participates in purine metabolism; AMP biosynthesis via salvage pathway; AMP from ADP: step 1/1. In terms of biological role, catalyzes the reversible transfer of the terminal phosphate group between ATP and AMP. Plays an important role in cellular energy homeostasis and in adenine nucleotide metabolism. In Deinococcus deserti (strain DSM 17065 / CIP 109153 / LMG 22923 / VCD115), this protein is Adenylate kinase.